Reading from the N-terminus, the 199-residue chain is Probable molybdenum cofactor guanylyltransferase (199 aa).

Residues 8–10 (LAG), lysine 20, aspartate 65, and aspartate 96 contribute to the GTP site. Aspartate 96 serves as a coordination point for Mg(2+).

It belongs to the MobA family. It depends on Mg(2+) as a cofactor.

The protein resides in the cytoplasm. The catalysed reaction is Mo-molybdopterin + GTP + H(+) = Mo-molybdopterin guanine dinucleotide + diphosphate. Functionally, transfers a GMP moiety from GTP to Mo-molybdopterin (Mo-MPT) cofactor (Moco or molybdenum cofactor) to form Mo-molybdopterin guanine dinucleotide (Mo-MGD) cofactor. The polypeptide is Probable molybdenum cofactor guanylyltransferase (Bacillus subtilis (strain 168)).